We begin with the raw amino-acid sequence, 146 residues long: Myoglobin (146 aa).

The Globin domain maps to 2–141 (GDFDMVLKFW…IIADIDATYK (140 aa)). Nitrite is bound at residue His60. His60 provides a ligand contact to O2. His89 contributes to the heme b binding site.

It belongs to the globin family. Monomeric.

The protein localises to the cytoplasm. The protein resides in the sarcoplasm. It carries out the reaction Fe(III)-heme b-[protein] + nitric oxide + H2O = Fe(II)-heme b-[protein] + nitrite + 2 H(+). It catalyses the reaction H2O2 + AH2 = A + 2 H2O. Functionally, monomeric heme protein which primary function is to store oxygen and facilitate its diffusion within muscle tissues. Reversibly binds oxygen through a pentacoordinated heme iron and enables its timely and efficient release as needed during periods of heightened demand. Depending on the oxidative conditions of tissues and cells, and in addition to its ability to bind oxygen, it also has a nitrite reductase activity whereby it regulates the production of bioactive nitric oxide. Under stress conditions, like hypoxia and anoxia, it also protects cells against reactive oxygen species thanks to its pseudoperoxidase activity. The protein is Myoglobin (mb) of Tetraodon nigroviridis (Spotted green pufferfish).